The following is a 201-amino-acid chain: Glutathione peroxidase 1 (201 aa).

Serine 32 carries the phosphoserine modification. Selenocysteine 47 is a catalytic residue. Residue selenocysteine 47 is a non-standard amino acid, selenocysteine. 3 positions are modified to N6-acetyllysine; alternate: lysine 86, lysine 112, and lysine 146. N6-succinyllysine; alternate is present on residues lysine 86, lysine 112, and lysine 146. Serine 195 and serine 199 each carry phosphoserine.

Belongs to the glutathione peroxidase family. As to quaternary structure, homotetramer. Interacts with MIEN1. During periods of oxidative stress, Sec-47 may react with a superoxide radical, irreversibly lose hydroselenide and be converted to dehydroalanine.

The protein resides in the cytoplasm. It is found in the mitochondrion. The catalysed reaction is 2 glutathione + H2O2 = glutathione disulfide + 2 H2O. It carries out the reaction a hydroperoxy polyunsaturated fatty acid + 2 glutathione = a hydroxy polyunsaturated fatty acid + glutathione disulfide + H2O. It catalyses the reaction tert-butyl hydroperoxide + 2 glutathione = tert-butanol + glutathione disulfide + H2O. The enzyme catalyses cumene hydroperoxide + 2 glutathione = 2-phenylpropan-2-ol + glutathione disulfide + H2O. The catalysed reaction is (13S)-hydroperoxy-(9Z,11E)-octadecadienoate + 2 glutathione = (13S)-hydroxy-(9Z,11E)-octadecadienoate + glutathione disulfide + H2O. It carries out the reaction (9S)-hydroperoxy-(10E,12Z)-octadecadienoate + 2 glutathione = (9S)-hydroxy-(10E,12Z)-octadecadienoate + glutathione disulfide + H2O. It catalyses the reaction (5S)-hydroperoxy-(6E,8Z,11Z,14Z)-eicosatetraenoate + 2 glutathione = (5S)-hydroxy-(6E,8Z,11Z,14Z)-eicosatetraenoate + glutathione disulfide + H2O. The enzyme catalyses (12S)-hydroperoxy-(5Z,8Z,10E,14Z)-eicosatetraenoate + 2 glutathione = (12S)-hydroxy-(5Z,8Z,10E,14Z)-eicosatetraenoate + glutathione disulfide + H2O. The catalysed reaction is (12R)-hydroperoxy-(5Z,8Z,10E,14Z)-eicosatetraenoate + 2 glutathione = (12R)-hydroxy-(5Z,8Z,10E,14Z)-eicosatetraenoate + glutathione disulfide + H2O. It carries out the reaction (15S)-hydroperoxy-(5Z,8Z,11Z,13E)-eicosatetraenoate + 2 glutathione = (15S)-hydroxy-(5Z,8Z,11Z,13E)-eicosatetraenoate + glutathione disulfide + H2O. It catalyses the reaction (5S)-hydroperoxy-(6E,8Z,11Z,14Z,17Z)-eicosapentaenoate + 2 glutathione = (5S)-hydroxy-(6E,8Z,11Z,14Z,17Z)-eicosapentaenoate + glutathione disulfide + H2O. The enzyme catalyses (12S)-hydroperoxy-(5Z,8Z,10E,14Z,17Z)-eicosapentaenoate + 2 glutathione = (12S)-hydroxy-(5Z,8Z,10E,14Z,17Z)-eicosapentaenoate + glutathione disulfide + H2O. The catalysed reaction is (15S)-hydroperoxy-(5Z,8Z,11Z,13E,17Z)-eicosapentaenoate + 2 glutathione = (15S)-hydroxy-(5Z,8Z,11Z,13E,17Z)-eicosapentaenoate + glutathione disulfide + H2O. It carries out the reaction (15S)-hydroperoxy-(11Z,13E)-eicosadienoate + 2 glutathione = (15S)-hydroxy-(11Z,13E)-eicosadienoate + glutathione disulfide + H2O. It catalyses the reaction (17S)-hydroperoxy-(4Z,7Z,10Z,13Z,15E,19Z)-docosahexaenoate + 2 glutathione = (17S)-hydroxy-(4Z,7Z,10Z,13Z,15E,19Z)-docosahexaenoate + glutathione disulfide + H2O. Functionally, catalyzes the reduction of hydroperoxides in a glutathione-dependent manner thus regulating cellular redox homeostasis. Can reduce small soluble hydroperoxides such as H2O2, cumene hydroperoxide and tert-butyl hydroperoxide, as well as several fatty acid-derived hydroperoxides. In platelets catalyzes the reduction of 12-hydroperoxyeicosatetraenoic acid, the primary product of the arachidonate 12-lipoxygenase pathway. The polypeptide is Glutathione peroxidase 1 (GPX1) (Pongo pygmaeus (Bornean orangutan)).